Here is a 635-residue protein sequence, read N- to C-terminus: Extracellular metalloproteinase 1 (635 aa).

Residues Met1–Ala19 form the signal peptide. Residues His20–His246 constitute a propeptide that is removed on maturation. N-linked (GlcNAc...) asparagine glycosylation is present at Asn287. His430 contributes to the Zn(2+) binding site. The active site involves Glu431. Residue His434 participates in Zn(2+) binding. Residues Asn475, Asn594, and Asn623 are each glycosylated (N-linked (GlcNAc...) asparagine).

The protein belongs to the peptidase M36 family. Zn(2+) serves as cofactor.

Its subcellular location is the secreted. Functionally, secreted metalloproteinase probably acting as a virulence factor. The protein is Extracellular metalloproteinase 1 (MEP1) of Trichophyton rubrum (Athlete's foot fungus).